The chain runs to 1139 residues: Autophagy-related protein 23 (1139 aa).

9 disordered regions span residues 1–148 (MFQR…EMSP), 225–327 (STDK…YDDE), 356–388 (LTTARETSTGLVESLENATRELSKTRDVASVKD), 475–569 (KNEK…DTAG), 648–674 (KKISSSTSDAEASSKMQSEMESIKTEY), 720–767 (RQES…RETE), 786–828 (EDAQ…SKLR), 935–961 (AAVEERDRIEDESATLARRKTRETEDL), and 977–1012 (HERDELEQREKEWRKRREELESVEEKAEAETDELRT). Basic and acidic residues predominate over residues 7–18 (SAIDRTIAEEQA). Low complexity predominate over residues 19–37 (RQQTATQSRSPSRTGSTSS). Coiled-coil stretches lie at residues 142-170 (KLQEMSPEIRQKLRKLEKLEATYPELLRS) and 215-259 (DMVM…STDQ). Composition is skewed to basic and acidic residues over residues 225–247 (STDKDELQKKYNEAEEKAKKLEE), 261–273 (KTSDSETSKDAQD), 373–385 (ATRELSKTRDVAS), and 475–494 (KNEKSDSQTKITDLTKKLES). Residues 323–495 (SYDDEIPQLQ…TDLTKKLESK (173 aa)) are a coiled coil. A compositionally biased stretch (low complexity) spans 496-522 (PAPAMLTPAATPMPTVLQPAATSATAA). Residues 526 to 537 (GKKKNNKKKKGK) are compositionally biased toward basic residues. The stretch at 566–1067 (DTAGNAELKA…AAQTKLVASS (502 aa)) forms a coiled coil. Positions 651 to 661 (SSSTSDAEASS) are enriched in low complexity. Basic and acidic residues-rich tracts occupy residues 728–767 (ATKEELANKTKELRDMEKREKDLKRDVERAQKISSDRETE), 786–815 (EDAQRVSGRDLRRSEAEKVEISGRADKAEQ), 935–945 (AAVEERDRIED), and 977–1011 (HERDELEQREKEWRKRREELESVEEKAEAETDELR). Residues 1082-1132 (SPAGAPDTVYLKTILLQFLEQKDTKLRAQLVPVLGKLLRFDKTDEQKWQKA) enclose the GRIP domain.

The protein belongs to the ATG23 family. As to quaternary structure, forms a complex with ATG9 and ATG27.

The protein localises to the cytoplasm. Its subcellular location is the preautophagosomal structure membrane. Functionally, required for cytoplasm to vacuole transport (Cvt) vesicle formation and efficient autophagy. Plays a role in ATG protein retrieval from the pre-autophagosomal structure (PAS) and is especially required for autophagy-dependent cycling of ATG9. Autophagy is required for proper vegetative growth, asexual/sexual reproduction, and full virulence. Autophagy is particularly involved in the biosynthesis of deoxynivalenol (DON), an important virulence determinant. This is Autophagy-related protein 23 from Gibberella zeae (strain ATCC MYA-4620 / CBS 123657 / FGSC 9075 / NRRL 31084 / PH-1) (Wheat head blight fungus).